Reading from the N-terminus, the 523-residue chain is 2-isopropylmalate synthase (523 aa).

Positions 5-267 (VIIFDTTLRD…HTNINHHEIW (263 aa)) constitute a Pyruvate carboxyltransferase domain. 4 residues coordinate Mn(2+): aspartate 14, histidine 202, histidine 204, and asparagine 238. Positions 392–523 (RLDYFSVQSG…QNKENNKETV (132 aa)) are regulatory domain.

It belongs to the alpha-IPM synthase/homocitrate synthase family. LeuA type 1 subfamily. Homodimer. Mn(2+) serves as cofactor.

The protein localises to the cytoplasm. The catalysed reaction is 3-methyl-2-oxobutanoate + acetyl-CoA + H2O = (2S)-2-isopropylmalate + CoA + H(+). It functions in the pathway amino-acid biosynthesis; L-leucine biosynthesis; L-leucine from 3-methyl-2-oxobutanoate: step 1/4. Functionally, catalyzes the condensation of the acetyl group of acetyl-CoA with 3-methyl-2-oxobutanoate (2-ketoisovalerate) to form 3-carboxy-3-hydroxy-4-methylpentanoate (2-isopropylmalate). The sequence is that of 2-isopropylmalate synthase from Salmonella paratyphi A (strain ATCC 9150 / SARB42).